The following is a 77-amino-acid chain: U8-lycotoxin-Ls1o (77 aa).

The first 20 residues, 1–20 (MKLMIFTGLVLFAIVSLIEA), serve as a signal peptide directing secretion. A propeptide spanning residues 21-26 (QAENGK) is cleaved from the precursor.

The protein belongs to the neurotoxin 19 (CSTX) family. 08 (U8-Lctx) subfamily. Post-translationally, contains 4 disulfide bonds. In terms of tissue distribution, expressed by the venom gland.

It is found in the secreted. The polypeptide is U8-lycotoxin-Ls1o (Lycosa singoriensis (Wolf spider)).